The sequence spans 634 residues: Chaperone protein DnaK (634 aa).

Phosphothreonine; by autocatalysis is present on Thr199. Residues 601-618 (AAAGQAQAESGAGAQGNA) show a composition bias toward low complexity. The disordered stretch occupies residues 601-634 (AAAGQAQAESGAGAQGNAKPDDVVDAEFEEVDKK). A compositionally biased stretch (acidic residues) spans 623-634 (VVDAEFEEVDKK).

The protein belongs to the heat shock protein 70 family.

Its function is as follows. Acts as a chaperone. This chain is Chaperone protein DnaK, found in Acidithiobacillus ferrooxidans (strain ATCC 23270 / DSM 14882 / CIP 104768 / NCIMB 8455) (Ferrobacillus ferrooxidans (strain ATCC 23270)).